Reading from the N-terminus, the 472-residue chain is Probable glycine dehydrogenase (decarboxylating) subunit 2 (472 aa).

K268 bears the N6-(pyridoxal phosphate)lysine mark.

The protein belongs to the GcvP family. C-terminal subunit subfamily. In terms of assembly, the glycine cleavage system is composed of four proteins: P, T, L and H. In this organism, the P 'protein' is a heterodimer of two subunits. The cofactor is pyridoxal 5'-phosphate.

It carries out the reaction N(6)-[(R)-lipoyl]-L-lysyl-[glycine-cleavage complex H protein] + glycine + H(+) = N(6)-[(R)-S(8)-aminomethyldihydrolipoyl]-L-lysyl-[glycine-cleavage complex H protein] + CO2. Its function is as follows. The glycine cleavage system catalyzes the degradation of glycine. The P protein binds the alpha-amino group of glycine through its pyridoxal phosphate cofactor; CO(2) is released and the remaining methylamine moiety is then transferred to the lipoamide cofactor of the H protein. The sequence is that of Probable glycine dehydrogenase (decarboxylating) subunit 2 from Thermoplasma acidophilum (strain ATCC 25905 / DSM 1728 / JCM 9062 / NBRC 15155 / AMRC-C165).